Consider the following 309-residue polypeptide: Polyprenal reductase (309 aa).

The next 7 membrane-spanning stretches (helical) occupy residues 12–32, 72–92, 114–134, 151–171, 184–204, 242–262, and 270–290; these read LPLY…FTLI, FYAI…SLIY, IPPI…LHVA, MNLF…ISIM, LHVS…LFWI, LVSC…FLVI, and FIIM…HSWY.

Belongs to the steroid 5-alpha reductase family. Polyprenal reductase subfamily.

The protein resides in the endoplasmic reticulum membrane. The catalysed reaction is a di-trans,poly-cis-dolichal + NADP(+) = a di-trans,poly-cis-polyprenal + NADPH + H(+). The protein operates within protein modification; protein glycosylation. Its function is as follows. Plays a key role in early steps of protein N-linked glycosylation by being involved in the conversion of polyprenol into dolichol. Acts as a polyprenal reductase that mediates the reduction of polyprenal into dolichal in a NADP-dependent mechanism. Dolichols are required for the synthesis of dolichol-linked monosaccharides and the oligosaccharide precursor used for N-glycosylation. This Caenorhabditis elegans protein is Polyprenal reductase.